Consider the following 240-residue polypeptide: Guanine nucleotide exchange factor sopE2 (240 aa).

Residues 78-240 form a GEF catalytic domain region; that stretch reads LTSKTVKDFM…IANKYLQNAS (163 aa).

This sequence belongs to the GEF (guanine exchange factor) SopE family.

It localises to the secreted. In terms of biological role, activator for CDC42 by directly engaging this Rho GTPase and acting as potent guanine nucleotide exchange factor (GEF). This activation results in actin cytoskeleton rearrangements and stimulates membrane ruffling, promoting bacterial entry into non-phagocytic cells. Chaperone InvB is required for secretion, translocation and stabilization of intracellular levels of sopE2. In Salmonella paratyphi A (strain ATCC 9150 / SARB42), this protein is Guanine nucleotide exchange factor sopE2 (sopE2).